The chain runs to 276 residues: uncharacterized protein (276 aa).

Residue 15 to 22 (GKGGVGKS) participates in ATP binding. 2 4Fe-4S ferredoxin-type domains span residues 68–96 (EIYEINDDCIRCGKCLDVCQFDAIGDFKI) and 92–121 (GDFKINPILCEGCGACELICEFDAIEPIKR). [4Fe-4S] cluster-binding residues include Cys76, Cys79, Cys82, Cys86, Cys101, Cys104, Cys107, and Cys111.

This is an uncharacterized protein from Methanocaldococcus jannaschii (strain ATCC 43067 / DSM 2661 / JAL-1 / JCM 10045 / NBRC 100440) (Methanococcus jannaschii).